A 435-amino-acid polypeptide reads, in one-letter code: Protein CHLOROPLAST IMPORT APPARATUS 2 (435 aa).

The N-terminal 59 residues, methionine 1–arginine 59, are a transit peptide targeting the chloroplast. Disordered stretches follow at residues lysine 21 to asparagine 66 and alanine 412 to arginine 435. Positions serine 29–serine 49 are enriched in low complexity. The segment covering arginine 56 to proline 65 has biased composition (basic residues). A CCT domain is found at arginine 383–arginine 425.

As to expression, expressed in leaves and young flower buds.

It localises to the plastid. The protein localises to the chloroplast. The protein resides in the nucleus. Functionally, responsible for specific up-regulation of the translocon genes TOC33 and TOC75 in leaves. Involved in the general chloroplast protein import pathway regulation, including protein import and protein translation efficiencies. In Arabidopsis thaliana (Mouse-ear cress), this protein is Protein CHLOROPLAST IMPORT APPARATUS 2 (CIA2).